Here is a 4250-residue protein sequence, read N- to C-terminus: Dynein axonemal heavy chain 1 (4250 aa).

The interval 1–73 is disordered; it reads MEECNKEGPS…KSPLTGTDKK (73 aa). The segment at 1–1527 is stem; that stretch reads MEECNKEGPS…YIRAVNAEFI (1527 aa). Residues 24-42 show a composition bias toward basic and acidic residues; it reads PESHDLEKILQESNYHPER. Positions 46-55 are enriched in pro residues; sequence NPDPKTPPLP. AAA stretches follow at residues 1528–1749, 1809–2042, 2174–2434, and 2532–2784; these read YGYE…VISA, QAIR…NTVK, TMMP…VFQG, and DYNQ…LARH. Positions 1566-1573 match the GPAGTGKT motif motif; sequence GPAGTGKT. 1566-1573 contacts ATP; the sequence is GPAGTGKT. The CFDEFNR motif signature appears at 1616–1622; the sequence is CFDEFNR. ATP contacts are provided by residues 1847–1854, 2212–2219, and 2571–2578; these read GPTGSGKS, GPTGTGKT, and GVGGSGRS. The stalk stretch occupies residues 2799–3097; that stretch reads FSILIGQKKM…EELEMKCEQC (299 aa). The stretch at 3045 to 3128 forms a coiled coil; the sequence is LREAQDDLEV…QETVENLENM (84 aa). AAA regions lie at residues 3182 to 3412 and 3625 to 3844; these read LGNP…EIQA and MQDF…QLKM.

The protein belongs to the dynein heavy chain family. In terms of assembly, consists of at least two heavy chains and a number of intermediate and light chains.

The protein localises to the cytoplasm. It is found in the cytoskeleton. It localises to the cilium axoneme. Its subcellular location is the cell projection. The protein resides in the cilium. The protein localises to the flagellum. Force generating protein of cilia required for sperm flagellum motility. Produces force towards the minus ends of microtubules. Dynein has ATPase activity; the force-producing power stroke is thought to occur on release of ADP. Required in spermatozoa for the formation of the inner dynein arms and biogenesis of the axoneme. This chain is Dynein axonemal heavy chain 1, found in Mus musculus (Mouse).